Consider the following 325-residue polypeptide: GMP reductase (325 aa).

Residue Cys174 is the Thioimidate intermediate of the active site. 203–226 lines the NADP(+) pocket; that stretch reads IIADGGIRTHGDIAKSIRFGATMV.

This sequence belongs to the IMPDH/GMPR family. GuaC type 2 subfamily.

The catalysed reaction is IMP + NH4(+) + NADP(+) = GMP + NADPH + 2 H(+). Its function is as follows. Catalyzes the irreversible NADPH-dependent deamination of GMP to IMP. It functions in the conversion of nucleobase, nucleoside and nucleotide derivatives of G to A nucleotides, and in maintaining the intracellular balance of A and G nucleotides. In Helicobacter pylori (strain G27), this protein is GMP reductase.